The sequence spans 374 residues: Golgi-associated kinase 1B (374 aa).

Over 1-38 (MSPDRTGRGSSSSSSSLKRLVCKSFVRAWGRRRPNLRR) the chain is Cytoplasmic. Residues 39-61 (AVLLICTASAIYGIVIASQVLRG) traverse the membrane as a helical; Signal-anchor for type II membrane protein segment. Over 62–374 (STHPGKALRK…LLQVYTRLDR (313 aa)) the chain is Extracellular. Over residues 136 to 146 (VRPKKRRKYGA) the composition is skewed to basic residues. The tract at residues 136-177 (VRPKKRRKYGARRPGVVQDTESKKDTLWSKVPNSQHKSQAQS) is disordered. The segment covering 166 to 177 (VPNSQHKSQAQS) has biased composition (polar residues). Asn-281 and Asn-314 each carry an N-linked (GlcNAc...) asparagine glycan.

The protein belongs to the GASK family.

The protein localises to the golgi apparatus membrane. This chain is Golgi-associated kinase 1B, found in Xenopus laevis (African clawed frog).